The following is a 236-amino-acid chain: Large ribosomal subunit protein uL1 (236 aa).

This sequence belongs to the universal ribosomal protein uL1 family. In terms of assembly, part of the 50S ribosomal subunit.

Binds directly to 23S rRNA. The L1 stalk is quite mobile in the ribosome, and is involved in E site tRNA release. In terms of biological role, protein L1 is also a translational repressor protein, it controls the translation of the L11 operon by binding to its mRNA. The chain is Large ribosomal subunit protein uL1 from Corynebacterium jeikeium (strain K411).